Here is a 130-residue protein sequence, read N- to C-terminus: Glycine cleavage system H protein (130 aa).

Residues 22-103 (KAYIGISDCA…PYGSWIIAVE (82 aa)) form the Lipoyl-binding domain. Residue K63 is modified to N6-lipoyllysine.

This sequence belongs to the GcvH family. The glycine cleavage system is composed of four proteins: P, T, L and H. (R)-lipoate is required as a cofactor.

In terms of biological role, the glycine cleavage system catalyzes the degradation of glycine. The H protein shuttles the methylamine group of glycine from the P protein to the T protein. This Clostridium botulinum (strain Kyoto / Type A2) protein is Glycine cleavage system H protein.